The primary structure comprises 632 residues: Golgin subfamily A member 8H (632 aa).

The segment at 1–77 (MAEETQHNKL…SSATLKDLES (77 aa)) is disordered. Coiled coils occupy residues 110–201 (VEHQ…LSSR) and 240–468 (ECAE…EKAD). Basic and acidic residues-rich tracts occupy residues 352–362 (KQEERIQEQHK) and 427–440 (HGGE…EEAP). 3 disordered regions span residues 352–379 (KQEE…EPNN), 423–452 (PGEG…DPES), and 496–524 (LSEP…DEGE). A compositionally biased stretch (gly residues) spans 508 to 520 (LGGGHHQAGAQGG).

The protein belongs to the GOLGA8 family.

The polypeptide is Golgin subfamily A member 8H (GOLGA8H) (Homo sapiens (Human)).